Consider the following 534-residue polypeptide: Cytochrome P450 78A9 (534 aa).

The chain crosses the membrane as a helical span at residues 26–46 (LALSLLVASLASLALSLFFWS). Residue Cys474 participates in heme binding.

This sequence belongs to the cytochrome P450 family. It depends on heme as a cofactor. Expressed in the funiculus of developing ovules.

It is found in the membrane. Plays a role in seed and fruit development. Functions probably in association with CYP78A6 in the regulation of seed growth. The polypeptide is Cytochrome P450 78A9 (CYP78A9) (Arabidopsis thaliana (Mouse-ear cress)).